A 594-amino-acid polypeptide reads, in one-letter code: F-box/LRR-repeat protein At3g58980 (594 aa).

The 49-residue stretch at 1 to 49 (MDRISNLPNEIICHIVSFLSAKEAAFASILSKRWRNLFTIVIKLQFDDS) folds into the F-box domain. LRR repeat units lie at residues 103-125 (ILDL…VFTC), 128-151 (LVKL…DAFL), 152-174 (PALE…AFEK), 203-218 (SPTL…DLYE), 219-242 (CEFT…AVPD), 249-272 (LDSL…GYVD), 288-314 (LRNV…AIPV), 315-339 (FKNL…FLPF), 344-369 (CPNL…VCHC), 403-414 (LEKLSGLKLVKL), 415-437 (HSLT…SSKC), 450-474 (LPSL…AFQK), 503-518 (SQTL…YWAE), 519-541 (HNLE…AHVP), and 584-594 (LRNVEILRLWM).

The sequence is that of F-box/LRR-repeat protein At3g58980 from Arabidopsis thaliana (Mouse-ear cress).